We begin with the raw amino-acid sequence, 66 residues long: Photosystem II reaction center protein H (66 aa).

A helical transmembrane segment spans residues 29 to 49; the sequence is PIMGLTMVLFLVFLLIILQIY.

Belongs to the PsbH family. PSII is composed of 1 copy each of membrane proteins PsbA, PsbB, PsbC, PsbD, PsbE, PsbF, PsbH, PsbI, PsbJ, PsbK, PsbL, PsbM, PsbT, PsbX, PsbY, PsbZ, Psb30/Ycf12, at least 3 peripheral proteins of the oxygen-evolving complex and a large number of cofactors. It forms dimeric complexes.

Its subcellular location is the plastid. It is found in the chloroplast thylakoid membrane. In terms of biological role, one of the components of the core complex of photosystem II (PSII), required for its stability and/or assembly. PSII is a light-driven water:plastoquinone oxidoreductase that uses light energy to abstract electrons from H(2)O, generating O(2) and a proton gradient subsequently used for ATP formation. It consists of a core antenna complex that captures photons, and an electron transfer chain that converts photonic excitation into a charge separation. This Thalassiosira pseudonana (Marine diatom) protein is Photosystem II reaction center protein H.